The following is an 89-amino-acid chain: Small ribosomal subunit protein uS15 (89 aa).

The protein belongs to the universal ribosomal protein uS15 family. Part of the 30S ribosomal subunit. Forms a bridge to the 50S subunit in the 70S ribosome, contacting the 23S rRNA.

In terms of biological role, one of the primary rRNA binding proteins, it binds directly to 16S rRNA where it helps nucleate assembly of the platform of the 30S subunit by binding and bridging several RNA helices of the 16S rRNA. Functionally, forms an intersubunit bridge (bridge B4) with the 23S rRNA of the 50S subunit in the ribosome. In Clavibacter michiganensis subsp. michiganensis (strain NCPPB 382), this protein is Small ribosomal subunit protein uS15.